Here is a 64-residue protein sequence, read N- to C-terminus: Peptide Ctri9677 (64 aa).

The N-terminal stretch at 1–22 (MKNNTILFTFLIVFLIASQIEA) is a signal peptide. A Leucine amide modification is found at Leu36. Positions 40-64 (SEDREFFDFFTDDNLAALEKALKEY) are excised as a propeptide.

This sequence belongs to the non-disulfide-bridged peptide (NDBP) superfamily. Short antimicrobial peptide (group 4) family. In terms of tissue distribution, expressed by the venom gland.

The protein localises to the secreted. In terms of biological role, antimicrobial peptide. This chain is Peptide Ctri9677, found in Chaerilus tricostatus (Scorpion).